A 176-amino-acid polypeptide reads, in one-letter code: Protein MOTHER of FT and TFL1 homolog 1 (176 aa).

It belongs to the phosphatidylethanolamine-binding protein family.

In terms of biological role, may form complexes with phosphorylated ligands by interfering with kinases and their effectors. The polypeptide is Protein MOTHER of FT and TFL1 homolog 1 (Oryza sativa subsp. japonica (Rice)).